Consider the following 874-residue polypeptide: Alanine--tRNA ligase (874 aa).

Positions 563, 567, 665, and 669 each coordinate Zn(2+).

This sequence belongs to the class-II aminoacyl-tRNA synthetase family. Zn(2+) serves as cofactor.

The protein localises to the cytoplasm. The catalysed reaction is tRNA(Ala) + L-alanine + ATP = L-alanyl-tRNA(Ala) + AMP + diphosphate. In terms of biological role, catalyzes the attachment of alanine to tRNA(Ala) in a two-step reaction: alanine is first activated by ATP to form Ala-AMP and then transferred to the acceptor end of tRNA(Ala). Also edits incorrectly charged Ser-tRNA(Ala) and Gly-tRNA(Ala) via its editing domain. In Actinobacillus succinogenes (strain ATCC 55618 / DSM 22257 / CCUG 43843 / 130Z), this protein is Alanine--tRNA ligase.